The chain runs to 31 residues: Diuretic hormone class 2 (31 aa).

Residue P31 is modified to Proline amide.

This sequence belongs to the diuretic hormone class 2 family.

It localises to the secreted. In terms of biological role, regulation of fluid secretion. Stimulates primary urine secretion by Malpighian tubules and causes a dose-dependent stimulation of cAMP levels in the tubules. Has a nonselective effect on Na(+)/K(+) ion transport. In vitro, primarily elevates intracellular Ca(2+). The sequence is that of Diuretic hormone class 2 from Apis mellifera (Honeybee).